A 119-amino-acid polypeptide reads, in one-letter code: Large ribosomal subunit protein uL18 (119 aa).

Belongs to the universal ribosomal protein uL18 family. As to quaternary structure, part of the 50S ribosomal subunit; part of the 5S rRNA/L5/L18/L25 subcomplex. Contacts the 5S and 23S rRNAs.

This is one of the proteins that bind and probably mediate the attachment of the 5S RNA into the large ribosomal subunit, where it forms part of the central protuberance. In Dinoroseobacter shibae (strain DSM 16493 / NCIMB 14021 / DFL 12), this protein is Large ribosomal subunit protein uL18.